A 1338-amino-acid polypeptide reads, in one-letter code: Nonribosomal peptide synthetase astA (1338 aa).

The disordered stretch occupies residues 22–52 (IAVVSGDIPSPHPKNEPSQTSTLHIPRDSDL). The tract at residues 271–681 (FQARCRQNPS…GRKGAEVKLR (411 aa)) is adenylation. Residues 820-893 (TPVEIIIHDA…SLAEKCSAGG (74 aa)) enclose the Carrier domain. S854 bears the O-(pantetheine 4'-phosphoryl)serine mark. Residues 949–1336 (TFIFRLSGPV…IIRFLDSPDS (388 aa)) form a condensation region.

It belongs to the NRP synthetase family.

It carries out the reaction 7beta,14,16-trihydroxyconfertifolin + benzoate + H(+) = dideacetyl astellolide A + H2O. The catalysed reaction is 7beta,14,16-trihydroxyconfertifolin + 4-hydroxybenzoate + H(+) = dideacetyl astellolide B + H2O. It functions in the pathway secondary metabolite biosynthesis; terpenoid biosynthesis. Its function is as follows. Nonribosomal peptide synthetase; part of the gene cluster that mediates the biosynthesis of astellolides, drimane-type sesquiterpene esters that show antimicrobial, anti-inflammatory, and anti-tumor activities. The first step in astellolide biosynthesis is performed by the sesquiterpene cyclase astC that catalyzes the formation of drimanyl pyrophosphate from farnesyl pyrophosphate. Drimanyl pyrophosphate is then dephosphorylated by the sesquiterpene phosphatase astI to produce drimanyl monophosphate which is further dephosphorylated to drim-8-ene-11-ol by atsK. Drim-8-ene-11-ol is converted to confertifolin, probably by the cytochrome P450 monooxygenase astD and/or the dehydrogenase astE. The cytochrome P450 monooxygenases astB, astF and astJ then hydroxylate confertifolin at C6, C14, or C15 to form trihydroxy confertifolin. The nonribosomal peptide synthetase astA catalyzes ester bond formation between trihydroxy contifolin and benzoic acid (BA) or 4-hydroxy benzoic acid (4HBA), leading to the formation of dideacetyl astellolides A and B, respectively. Finally, the O-acetyltransferase astG converts dideacetyl astellolides A and B into deacetyl astellolides A and B. The protein is Nonribosomal peptide synthetase astA of Aspergillus oryzae (strain ATCC 42149 / RIB 40) (Yellow koji mold).